A 408-amino-acid chain; its full sequence is uncharacterized protein (408 aa).

Belongs to the protein kinase superfamily. ADCK protein kinase family.

This is an uncharacterized protein from Synechocystis sp. (strain ATCC 27184 / PCC 6803 / Kazusa).